The following is a 1002-amino-acid chain: Isoleucine--tRNA ligase, mitochondrial (1002 aa).

The 'HIGH' region signature appears at 94–104 (PYANGELHLGH). The short motif at 668-672 (KMSKS) is the 'KMSKS' region element. Lys671 is a binding site for ATP.

This sequence belongs to the class-I aminoacyl-tRNA synthetase family.

Its subcellular location is the mitochondrion matrix. It catalyses the reaction tRNA(Ile) + L-isoleucine + ATP = L-isoleucyl-tRNA(Ile) + AMP + diphosphate. In Saccharomyces cerevisiae (strain ATCC 204508 / S288c) (Baker's yeast), this protein is Isoleucine--tRNA ligase, mitochondrial (ISM1).